The chain runs to 203 residues: Probable GTP-binding protein EngB (203 aa).

Residues 24–199 (DGSEVAFAGR…HTVIETWLGL (176 aa)) form the EngB-type G domain. Residues 32–39 (GRSNAGKS), 59–63 (GRTQQ), 77–80 (DLPG), 144–147 (TKAD), and 178–180 (FSS) each bind GTP. Ser-39 and Thr-61 together coordinate Mg(2+).

Belongs to the TRAFAC class TrmE-Era-EngA-EngB-Septin-like GTPase superfamily. EngB GTPase family. The cofactor is Mg(2+).

Necessary for normal cell division and for the maintenance of normal septation. The sequence is that of Probable GTP-binding protein EngB from Xylella fastidiosa (strain Temecula1 / ATCC 700964).